Consider the following 519-residue polypeptide: Na(+)/H(+) exchange regulatory cofactor NHE-RF3 (519 aa).

In terms of domain architecture, PDZ 1 spans 9–90; the sequence is ECKLSKQEGQ…SVTLLVLDGD (82 aa). Residues Ser-108, Ser-148, Ser-192, Ser-250, Ser-334, and Ser-348 each carry the phosphoserine modification. 2 PDZ domains span residues 134 to 215 and 243 to 323; these read RLCY…VDKE and IVEM…VDKE. Residues 347–374 form a disordered region; sequence GSVKEAPAPTPTSLEVSSPPDTTEEVDH. A compositionally biased stretch (polar residues) spans 357–367; that stretch reads PTSLEVSSPPD. The 81-residue stretch at 378–458 folds into the PDZ 4 domain; it reads LCRLAKGENG…NVTLLVCGKK (81 aa). Thr-451 bears the Phosphothreonine mark. The segment at 479–519 is disordered; sequence DTPPDSKEGIVVESNHDSHMAKERAHSTASHSSSNSEDTEM. Residues 482–504 show a composition bias toward basic and acidic residues; sequence PDSKEGIVVESNHDSHMAKERAH. A phosphoserine mark is found at Ser-492, Ser-508, Ser-510, Ser-511, Ser-512, and Ser-514. The segment covering 505–519 has biased composition (low complexity); it reads STASHSSSNSEDTEM.

It belongs to the NHER family. As to quaternary structure, interacts with PDZK1IP1 and ABCC2. Interacts (via PDZ domains 1 and 3) with SCARB1 (C-terminal domain). Forms a heterodimeric complex with NHERF1. Interacts with AKAP2, BCR, CFTR, SLC22A12, SLC22A4, SLC22A5, NHERF2 and SLC17A1. Component of a complex, composed of PDZK1, SYNGAP1, KLHL17 and NMDA receptors. Interacts (via PDZ1 domain) directly with KLHL17; the interaction is important for integrity of actin cytoskeleton structures in neurons. Interacts (via the first PDZ domain) with PTGIR (via non-isoprenylated C-terminus). Interacts (via C-terminal PDZ domain) with SLC26A6 (via C-terminal domain). Interacts (via C-terminal PDZ domain) with SLC9A3 (via C-terminal domain). Interacts (via PDZ domains 1 and 3) with SLC5A8 (via PDZ-binding motif); interaction increases nicotinate transport activity of SLC5A8. Expression is limited to epithelial cells. Expressed in the kidney (brush border of proximal tubule), pancreas, liver, and small intestine. Expressed at a lower level in the adrenal cortex, testis and stomach. Overexpressed in breast, renal and lung carcinomas.

It localises to the membrane. The protein resides in the cell membrane. A scaffold protein that connects plasma membrane proteins and regulatory components, regulating their surface expression in epithelial cells apical domains. May be involved in the coordination of a diverse range of regulatory processes for ion transport and second messenger cascades. In complex with NHERF1, may cluster proteins that are functionally dependent in a mutual fashion and modulate the trafficking and the activity of the associated membrane proteins. May play a role in the cellular mechanisms associated with multidrug resistance through its interaction with ABCC2 and PDZK1IP1. May potentiate the CFTR chloride channel activity. Required for normal cell-surface expression of SCARB1. Plays a role in maintaining normal plasma cholesterol levels via its effects on SCARB1. Plays a role in the normal localization and function of the chloride-anion exchanger SLC26A6 to the plasma membrane in the brush border of the proximal tubule of the kidney. May be involved in the regulation of proximal tubular Na(+)-dependent inorganic phosphate cotransport therefore playing an important role in tubule function. The polypeptide is Na(+)/H(+) exchange regulatory cofactor NHE-RF3 (PDZK1) (Homo sapiens (Human)).